The primary structure comprises 315 residues: Pantothenate synthetase (315 aa).

45-52 is an ATP binding site; sequence MGALHEGH. His-52 (proton donor) is an active-site residue. Gln-77 is a (R)-pantoate binding site. Beta-alanine is bound at residue Gln-77. ATP is bound at residue 163-166; it reads GEKD. Residue Gln-169 participates in (R)-pantoate binding. ATP is bound by residues Val-192 and 200–203; that span reads MSSR.

It belongs to the pantothenate synthetase family. In terms of assembly, homodimer.

It localises to the cytoplasm. The catalysed reaction is (R)-pantoate + beta-alanine + ATP = (R)-pantothenate + AMP + diphosphate + H(+). It participates in cofactor biosynthesis; (R)-pantothenate biosynthesis; (R)-pantothenate from (R)-pantoate and beta-alanine: step 1/1. Catalyzes the condensation of pantoate with beta-alanine in an ATP-dependent reaction via a pantoyl-adenylate intermediate. The chain is Pantothenate synthetase from Mycobacterium ulcerans (strain Agy99).